A 416-amino-acid chain; its full sequence is UDP-N-acetylglucosamine 1-carboxyvinyltransferase (416 aa).

A phosphoenolpyruvate-binding site is contributed by 22 to 23 (KN). R92 contacts UDP-N-acetyl-alpha-D-glucosamine. C116 acts as the Proton donor in catalysis. C116 bears the 2-(S-cysteinyl)pyruvic acid O-phosphothioketal mark. UDP-N-acetyl-alpha-D-glucosamine-binding positions include 121–125 (RPVDQ), D304, and I326.

It belongs to the EPSP synthase family. MurA subfamily.

Its subcellular location is the cytoplasm. The catalysed reaction is phosphoenolpyruvate + UDP-N-acetyl-alpha-D-glucosamine = UDP-N-acetyl-3-O-(1-carboxyvinyl)-alpha-D-glucosamine + phosphate. Its pathway is cell wall biogenesis; peptidoglycan biosynthesis. Functionally, cell wall formation. Adds enolpyruvyl to UDP-N-acetylglucosamine. The chain is UDP-N-acetylglucosamine 1-carboxyvinyltransferase from Janthinobacterium sp. (strain Marseille) (Minibacterium massiliensis).